The chain runs to 259 residues: GTP cyclohydrolase FolE2 (259 aa).

It belongs to the GTP cyclohydrolase IV family.

It catalyses the reaction GTP + H2O = 7,8-dihydroneopterin 3'-triphosphate + formate + H(+). The protein operates within cofactor biosynthesis; 7,8-dihydroneopterin triphosphate biosynthesis; 7,8-dihydroneopterin triphosphate from GTP: step 1/1. In terms of biological role, converts GTP to 7,8-dihydroneopterin triphosphate. In Nitratidesulfovibrio vulgaris (strain DSM 19637 / Miyazaki F) (Desulfovibrio vulgaris), this protein is GTP cyclohydrolase FolE2.